A 155-amino-acid chain; its full sequence is UPF0260 protein Smed_0627 (155 aa).

It belongs to the UPF0260 family.

This chain is UPF0260 protein Smed_0627, found in Sinorhizobium medicae (strain WSM419) (Ensifer medicae).